The sequence spans 204 residues: Ribosome maturation factor RimP (204 aa).

Belongs to the RimP family.

It localises to the cytoplasm. Functionally, required for maturation of 30S ribosomal subunits. This chain is Ribosome maturation factor RimP, found in Allorhizobium ampelinum (strain ATCC BAA-846 / DSM 112012 / S4) (Agrobacterium vitis (strain S4)).